We begin with the raw amino-acid sequence, 423 residues long: Gamma-glutamyl phosphate reductase (423 aa).

The protein belongs to the gamma-glutamyl phosphate reductase family.

The protein resides in the cytoplasm. The enzyme catalyses L-glutamate 5-semialdehyde + phosphate + NADP(+) = L-glutamyl 5-phosphate + NADPH + H(+). Its pathway is amino-acid biosynthesis; L-proline biosynthesis; L-glutamate 5-semialdehyde from L-glutamate: step 2/2. Its function is as follows. Catalyzes the NADPH-dependent reduction of L-glutamate 5-phosphate into L-glutamate 5-semialdehyde and phosphate. The product spontaneously undergoes cyclization to form 1-pyrroline-5-carboxylate. This Pseudomonas putida (strain GB-1) protein is Gamma-glutamyl phosphate reductase.